The following is a 116-amino-acid chain: MKPELLETFENQYPNRDYTIEIVNPEFTSVCPKTGLPDFGTITLQYIPNKLCVELKSLKYYYLEFRNAGIFYENVTNKILDDLVKAVKPKEMKIISEWKARGGITTTVTASYEAEK.

The active-site Thioimide intermediate is Cys-31. Asp-38 serves as the catalytic Proton donor. Residues 53–55 and 72–73 contribute to the substrate site; these read VEL and YE.

It belongs to the GTP cyclohydrolase I family. QueF type 1 subfamily.

Its subcellular location is the cytoplasm. The catalysed reaction is 7-aminomethyl-7-carbaguanine + 2 NADP(+) = 7-cyano-7-deazaguanine + 2 NADPH + 3 H(+). It functions in the pathway tRNA modification; tRNA-queuosine biosynthesis. Its function is as follows. Catalyzes the NADPH-dependent reduction of 7-cyano-7-deazaguanine (preQ0) to 7-aminomethyl-7-deazaguanine (preQ1). The protein is NADPH-dependent 7-cyano-7-deazaguanine reductase of Chloroherpeton thalassium (strain ATCC 35110 / GB-78).